The primary structure comprises 225 residues: Insulin-induced gene 2 protein (225 aa).

Topologically, residues M1–L28 are cytoplasmic. The helical transmembrane segment at M29 to I51 threads the bilayer. Residues Q52–A70 are Lumenal-facing. Residues W71 to Y88 form a helical membrane-spanning segment. Topologically, residues P89–R103 are cytoplasmic. A helical transmembrane segment spans residues E104–D126. The Lumenal portion of the chain corresponds to F127–N129. Residues N130–F148 form a helical membrane-spanning segment. Residues D149–S153 are Cytoplasmic-facing. S151 bears the Phosphoserine mark. Residues G154 to N175 form a helical membrane-spanning segment. At G176–R189 the chain is on the lumenal side. A helical transmembrane segment spans residues S190–G207. Residues R208–E225 are Cytoplasmic-facing. C215 is subject to Cysteine sulfenic acid (-SOH); alternate. C215 participates in a covalent cross-link: Glycyl cysteine thioester (Cys-Gly) (interchain with G-Cter in ubiquitin); alternate. A KxHxx motif is present at residues A219–E225.

The protein belongs to the INSIG family. As to quaternary structure, interacts with SCAP; interaction is direct and only takes place in the presence of sterols; it prevents interaction between SCAP and the coat protein complex II (COPII). Associates with the SCAP-SREBP complex (composed of SCAP and SREBF1/SREBP1 or SREBF2/SREBP2); association is mediated via its interaction with SCAP and only takes place in the presence of sterols. Interacts with RNF139. Interacts with RNF145. Phosphorylation at Ser-151 by PCK1 reduces binding to oxysterol, disrupting the interaction between INSIG2 and SCAP, thereby promoting nuclear translocation of SREBP proteins (SREBF1/SREBP1 or SREBF2/SREBP2) and subsequent transcription of downstream lipogenesis-related genes. In terms of processing, polyubiquitinated by AMFR/gp78 at Cys-215 in some tissues such as adipose tissues, undifferentiated myoblasts and liver, leading to its degradation. In differentiated myotubes, Cys-215 oxidation prevents ubiquitination at the same site, resulting in protein stabilization. Post-translationally, oxidized at Cys-215 in differentiated myotubes, preventing ubiquitination at the same site, and resulting in protein stabilization.

The protein resides in the endoplasmic reticulum membrane. Oxysterol-binding protein that mediates feedback control of cholesterol synthesis by controlling both endoplasmic reticulum to Golgi transport of SCAP and degradation of HMGCR. Acts as a negative regulator of cholesterol biosynthesis by mediating the retention of the SCAP-SREBP complex in the endoplasmic reticulum, thereby blocking the processing of sterol regulatory element-binding proteins (SREBPs) SREBF1/SREBP1 and SREBF2/SREBP2. Binds oxysterol, including 22-hydroxycholesterol, 24-hydroxycholesterol, 25-hydroxycholesterol and 27-hydroxycholesterol, regulating interaction with SCAP and retention of the SCAP-SREBP complex in the endoplasmic reticulum. In presence of oxysterol, interacts with SCAP, retaining the SCAP-SREBP complex in the endoplasmic reticulum, thereby preventing SCAP from escorting SREBF1/SREBP1 and SREBF2/SREBP2 to the Golgi. Sterol deprivation or phosphorylation by PCK1 reduce oxysterol-binding, disrupting the interaction between INSIG2 and SCAP, thereby promoting Golgi transport of the SCAP-SREBP complex, followed by processing and nuclear translocation of SREBF1/SREBP1 and SREBF2/SREBP2. Also regulates cholesterol synthesis by regulating degradation of HMGCR: initiates the sterol-mediated ubiquitin-mediated endoplasmic reticulum-associated degradation (ERAD) of HMGCR via recruitment of the reductase to the ubiquitin ligase RNF139. The protein is Insulin-induced gene 2 protein of Papio anubis (Olive baboon).